A 1451-amino-acid polypeptide reads, in one-letter code: DNA excision repair protein ERCC-6-like (1451 aa).

The TPR 1 repeat unit spans residues 27–60; sequence YDRYRQKGKEAALNGELPRALELFQLAYQLQPSE. Positions 118-286 constitute a Helicase ATP-binding domain; sequence SLYRDGRKGG…WALFDFACQG (169 aa). 131–138 serves as a coordination point for ATP; the sequence is DDMGLGKT. The short motif at 237-240 is the DEAH box element; sequence DEAH. Positions 479 to 639 constitute a Helicase C-terminal domain; it reads FVVSLMECLR…PFRYFSKQEL (161 aa). Disordered stretches follow at residues 647-669, 778-804, 935-1006, 1035-1054, 1063-1083, 1096-1140, and 1182-1343; these read DTRSSSTQQQLQAMHAQSRRSDT, NSFDEPEFEEDEQNLPSAEDAEMETAS, DDTS…ATTD, DEEVHEVEESAAEESPEFQL, LEEPSINHDKQNNGEFVNYND, RSTP…LTSS, and LLEN…SAEL. The segment covering 781-804 has biased composition (acidic residues); the sequence is DEPEFEEDEQNLPSAEDAEMETAS. Polar residues-rich tracts occupy residues 944–964 and 992–1002; these read SDFNTESKQQNSSQRFQSPSL and QVLSSPLSQHE. The residue at position 961 (serine 961) is a Phosphoserine. Acidic residues predominate over residues 1035-1050; that stretch reads DEEVHEVEESAAEESP. The segment covering 1063 to 1074 has biased composition (basic and acidic residues); the sequence is LEEPSINHDKQN. Positions 1121-1132 are enriched in acidic residues; sequence DTEEEEEEEEES. Over residues 1213–1230 the composition is skewed to polar residues; that stretch reads VQTSSGDNSKSYETSEAN. The segment covering 1244–1278 has biased composition (basic and acidic residues); sequence YREGKNTSDKVSESNETHSEEFAEEEKPSGDKSES. The segment covering 1310–1341 has biased composition (acidic residues); that stretch reads SEADESVVEEEEPSGETLNTEESEMGEEEESA. One copy of the TPR 2 repeat lies at 1402-1435; sequence YNLLVLSGKQSLAEGRKQEALDFFLKAIDINTGD.

Belongs to the SNF2/RAD54 helicase family.

The protein localises to the chromosome. The protein resides in the centromere. It is found in the kinetochore. The catalysed reaction is ATP + H2O = ADP + phosphate + H(+). Functionally, DNA helicase that acts as a tension sensor that associates with catenated DNA which is stretched under tension until it is resolved during anaphase. Functions as ATP-dependent DNA translocase. Can promote Holliday junction branch migration (in vitro). The polypeptide is DNA excision repair protein ERCC-6-like (ercc6l) (Danio rerio (Zebrafish)).